We begin with the raw amino-acid sequence, 432 residues long: UDP-N-acetylglucosamine 1-carboxyvinyltransferase (432 aa).

22–23 (KN) lines the phosphoenolpyruvate pocket. Arg101 contributes to the UDP-N-acetyl-alpha-D-glucosamine binding site. The active-site Proton donor is the Cys125. Cys125 is subject to 2-(S-cysteinyl)pyruvic acid O-phosphothioketal. UDP-N-acetyl-alpha-D-glucosamine is bound by residues 130–134 (RPVDL), Asp315, and Ile337.

It belongs to the EPSP synthase family. MurA subfamily.

It localises to the cytoplasm. It carries out the reaction phosphoenolpyruvate + UDP-N-acetyl-alpha-D-glucosamine = UDP-N-acetyl-3-O-(1-carboxyvinyl)-alpha-D-glucosamine + phosphate. It participates in cell wall biogenesis; peptidoglycan biosynthesis. Cell wall formation. Adds enolpyruvyl to UDP-N-acetylglucosamine. This chain is UDP-N-acetylglucosamine 1-carboxyvinyltransferase, found in Paramagnetospirillum magneticum (strain ATCC 700264 / AMB-1) (Magnetospirillum magneticum).